Consider the following 142-residue polypeptide: Hemoglobin subunit alpha-2 (142 aa).

The Globin domain occupies 2–142; the sequence is LLSADDKKHI…VSTVLTSKYR (141 aa). Position 59 (His59) interacts with O2. His88 is a binding site for heme b.

This sequence belongs to the globin family. Heterotetramer of two alpha chains and two beta chains. As to expression, red blood cells.

Functionally, involved in oxygen transport from the lung to the various peripheral tissues. In Xenopus laevis (African clawed frog), this protein is Hemoglobin subunit alpha-2 (hba2).